A 326-amino-acid chain; its full sequence is tRNA-modifying protein YgfZ (326 aa).

Residues Trp27 and Trp189 each coordinate folate.

The protein belongs to the tRNA-modifying YgfZ family.

Its subcellular location is the cytoplasm. Its function is as follows. Folate-binding protein involved in regulating the level of ATP-DnaA and in the modification of some tRNAs. It is probably a key factor in regulatory networks that act via tRNA modification, such as initiation of chromosomal replication. This Salmonella arizonae (strain ATCC BAA-731 / CDC346-86 / RSK2980) protein is tRNA-modifying protein YgfZ.